A 332-amino-acid chain; its full sequence is Decaprenyl-phosphate phosphoribosyltransferase (332 aa).

Positions 1 to 12 (MSEHAAEHHRDT) are enriched in basic and acidic residues. Positions 1 to 36 (MSEHAAEHHRDTQNFLTSEPHTTAIEDNKKRQPPKN) are disordered. A run of 2 helical transmembrane segments spans residues 50–70 (WVKN…AIFN) and 74–94 (IIDV…IYLV). 5-phospho-alpha-D-ribose 1-diphosphate is bound by residues K52 and Y92. Residues N95 and D99 each coordinate Mg(2+). K109 provides a ligand contact to 5-phospho-alpha-D-ribose 1-diphosphate. 2 consecutive transmembrane segments (helical) span residues 114–134 (IAAG…LIAL) and 146–166 (VALA…CFGW). K167 and R184 together coordinate 5-phospho-alpha-D-ribose 1-diphosphate. Transmembrane regions (helical) follow at residues 169–189 (MPVI…MAGG) and 190–210 (VAAG…GSLF). Residue K215 participates in trans,octa-cis-decaprenyl phosphate binding. 3 consecutive transmembrane segments (helical) span residues 244-264 (FVWT…GFDL), 273-293 (PWYQ…AAGV), and 310-330 (VLQV…YIMP).

The protein belongs to the UbiA prenyltransferase family. DPPR synthase subfamily. Mg(2+) serves as cofactor.

The protein resides in the cell inner membrane. The enzyme catalyses trans,octa-cis-decaprenyl phosphate + 5-phospho-alpha-D-ribose 1-diphosphate + H(+) = trans,octa-cis-decaprenylphospho-beta-D-ribofuranose 5-phosphate + diphosphate. Its pathway is cell wall biogenesis; cell wall polysaccharide biosynthesis. Functionally, involved in the biosynthesis of decaprenylphosphoryl arabinose (DPA) a precursor for arabinan synthesis in mycobacterial cell wall biosynthesis. Catalyzes the transfer of a 5-phosphoribosyl residue from phosphoribose diphosphate (PRPP) to decaprenyl phosphate (DP) to form decaprenylphosphoryl-5-phosphoribose (DPPR). The sequence is that of Decaprenyl-phosphate phosphoribosyltransferase from Corynebacterium glutamicum (strain ATCC 13032 / DSM 20300 / JCM 1318 / BCRC 11384 / CCUG 27702 / LMG 3730 / NBRC 12168 / NCIMB 10025 / NRRL B-2784 / 534).